The sequence spans 412 residues: Dihydrolipoyllysine-residue acetyltransferase component of pyruvate dehydrogenase complex (412 aa).

A Lipoyl-binding domain is found at 2–78 (PIKILMPALS…PVNSLIAVLS (77 aa)). The residue at position 43 (Lys43) is an N6-lipoyllysine. One can recognise a Peripheral subunit-binding (PSBD) domain in the interval 132–169 (FASPLAKRLAKMRNIRFESVKGSGPHGRIVKQDILSYT). His385 is a catalytic residue.

It belongs to the 2-oxoacid dehydrogenase family. As to quaternary structure, forms a 24-polypeptide structural core with octahedral symmetry. (R)-lipoate is required as a cofactor.

It catalyses the reaction N(6)-[(R)-dihydrolipoyl]-L-lysyl-[protein] + acetyl-CoA = N(6)-[(R)-S(8)-acetyldihydrolipoyl]-L-lysyl-[protein] + CoA. The pyruvate dehydrogenase complex catalyzes the overall conversion of pyruvate to acetyl-CoA and CO(2). It contains multiple copies of three enzymatic components: pyruvate dehydrogenase (E1), dihydrolipoamide acetyltransferase (E2) and lipoamide dehydrogenase (E3). This is Dihydrolipoyllysine-residue acetyltransferase component of pyruvate dehydrogenase complex (pdhC) from Rickettsia conorii (strain ATCC VR-613 / Malish 7).